Here is a 122-residue protein sequence, read N- to C-terminus: Protein GL2-INTERACTING REPRESSOR 1 (122 aa).

Over residues 1-10 (MSRRSPKLEL) the composition is skewed to basic and acidic residues. Residues 1–62 (MSRRSPKLEL…PSVRYSTSPE (62 aa)) form a disordered region. Positions 7–12 (KLELKL) match the EAR motif. Over residues 27–46 (SPSRSATTSPTSPPSSCVSS) the composition is skewed to low complexity. Over residues 47 to 62 (EMNQDEPSVRYSTSPE) the composition is skewed to polar residues.

In terms of assembly, interacts with GL2. Interacts with TPL. As to expression, expressed in root and shoot meristems.

The protein resides in the nucleus. Its function is as follows. Acts as a negative regulator of root hair development redundantly with GIR2. GIR1 and GIR2 may function as adapter proteins that associate with GL2 and participate in the control of root hair formation. GIR1 and GIR2 may function as adapter proteins that associate with TPL and participate in the repression of root gene expression. The sequence is that of Protein GL2-INTERACTING REPRESSOR 1 from Arabidopsis thaliana (Mouse-ear cress).